Consider the following 281-residue polypeptide: Pantothenate synthetase (281 aa).

30 to 37 (MGNLHQGH) lines the ATP pocket. The active-site Proton donor is His37. Gln61 contributes to the (R)-pantoate binding site. Residue Gln61 coordinates beta-alanine. ATP is bound at residue 149–152 (GNKD). Gln155 is a binding site for (R)-pantoate. ATP-binding positions include Ile178 and 186–189 (MSSR).

The protein belongs to the pantothenate synthetase family. As to quaternary structure, homodimer.

It is found in the cytoplasm. It carries out the reaction (R)-pantoate + beta-alanine + ATP = (R)-pantothenate + AMP + diphosphate + H(+). It functions in the pathway cofactor biosynthesis; (R)-pantothenate biosynthesis; (R)-pantothenate from (R)-pantoate and beta-alanine: step 1/1. Catalyzes the condensation of pantoate with beta-alanine in an ATP-dependent reaction via a pantoyl-adenylate intermediate. The chain is Pantothenate synthetase from Shewanella oneidensis (strain ATCC 700550 / JCM 31522 / CIP 106686 / LMG 19005 / NCIMB 14063 / MR-1).